An 86-amino-acid polypeptide reads, in one-letter code: MKEGIHPKNYRPVVFQDLSNGDKFIVRSCIVTSETIKMEDGHEYPLSKVEITNASHPFFTGQQMLLDTAGRVERFNKRFGKMGKKS.

The protein belongs to the bacterial ribosomal protein bL31 family. Type B subfamily. As to quaternary structure, part of the 50S ribosomal subunit.

In Chloroherpeton thalassium (strain ATCC 35110 / GB-78), this protein is Large ribosomal subunit protein bL31B.